We begin with the raw amino-acid sequence, 120 residues long: Ribosome-binding factor A (120 aa).

This sequence belongs to the RbfA family. In terms of assembly, monomer. Binds 30S ribosomal subunits, but not 50S ribosomal subunits or 70S ribosomes.

It is found in the cytoplasm. One of several proteins that assist in the late maturation steps of the functional core of the 30S ribosomal subunit. Associates with free 30S ribosomal subunits (but not with 30S subunits that are part of 70S ribosomes or polysomes). Required for efficient processing of 16S rRNA. May interact with the 5'-terminal helix region of 16S rRNA. The chain is Ribosome-binding factor A from Limosilactobacillus fermentum (strain NBRC 3956 / LMG 18251) (Lactobacillus fermentum).